We begin with the raw amino-acid sequence, 468 residues long: Cysteine--tRNA ligase (468 aa).

C29 lines the Zn(2+) pocket. Residues P31–N41 carry the 'HIGH' region motif. Positions 209, 234, and 238 each coordinate Zn(2+). The short motif at K266–S270 is the 'KMSKS' region element. An ATP-binding site is contributed by K269.

It belongs to the class-I aminoacyl-tRNA synthetase family. In terms of assembly, monomer. The cofactor is Zn(2+).

The protein resides in the cytoplasm. The enzyme catalyses tRNA(Cys) + L-cysteine + ATP = L-cysteinyl-tRNA(Cys) + AMP + diphosphate. This Brevibacillus brevis (strain 47 / JCM 6285 / NBRC 100599) protein is Cysteine--tRNA ligase.